The following is a 312-amino-acid chain: Ribosomal protein L11 methyltransferase (312 aa).

The S-adenosyl-L-methionine site is built by T162, G183, D205, and N248.

Belongs to the methyltransferase superfamily. PrmA family.

Its subcellular location is the cytoplasm. The catalysed reaction is L-lysyl-[protein] + 3 S-adenosyl-L-methionine = N(6),N(6),N(6)-trimethyl-L-lysyl-[protein] + 3 S-adenosyl-L-homocysteine + 3 H(+). In terms of biological role, methylates ribosomal protein L11. The polypeptide is Ribosomal protein L11 methyltransferase (Geobacillus kaustophilus (strain HTA426)).